The sequence spans 946 residues: Protocadherin alpha-10 (946 aa).

The first 30 residues, 1 to 30, serve as a signal peptide directing secretion; the sequence is MSCVAMKYCHESWCLLLSLLLFAIWEPGSG. Cadherin domains lie at 31-134, 135-243, 244-351, 352-456, 457-566, and 582-679; these read QLRY…PPVF, PTTE…APAF, DRAI…APKI, IVTS…APAF, AQSE…APTL, and VPRS…APKA. At 31–697 the chain is on the extracellular side; sequence QLRYSVPEEA…ASESSVVDVN (667 aa). The N-linked (GlcNAc...) asparagine glycan is linked to Asn-258. N-linked (GlcNAc...) asparagine glycosylation is present at Asn-549. A helical membrane pass occupies residues 698 to 718; it reads VYLIIAICAVSSLLVLTLVLY. Residues 719-946 lie on the Cytoplasmic side of the membrane; that stretch reads TALRCSALPT…GNSTTDNSDQ (228 aa). PXXP repeat units follow at residues 734 to 737, 774 to 777, 795 to 798, 828 to 831, 869 to 872, and 887 to 890; these read PGKP, PSVP, PRQP, PGGP, PGNP, and PGSP. The interval 734 to 890 is 6 X 4 AA repeats of P-X-X-P; that stretch reads PGKPMLVCSS…PDKFIIPGSP (157 aa). Disordered stretches follow at residues 826-852 and 865-946; these read AGPG…EVSP and FKYG…NSDQ. Residues 905–919 show a composition bias toward basic and acidic residues; the sequence is DKSDFITFGKKEETK.

Its subcellular location is the cell membrane. Its function is as follows. Potential calcium-dependent cell-adhesion protein. May be involved in the establishment and maintenance of specific neuronal connections in the brain. This Mus musculus (Mouse) protein is Protocadherin alpha-10.